We begin with the raw amino-acid sequence, 1238 residues long: ATP-dependent helicase/nuclease subunit A (1238 aa).

The region spanning 6 to 474 is the UvrD-like helicase ATP-binding domain; sequence TKWTETQKSA…IKLSENFRSR (469 aa). 27–34 provides a ligand contact to ATP; the sequence is AGAGTGKT. The 300-residue stretch at 512–811 folds into the UvrD-like helicase C-terminal domain; the sequence is PFEGNCGGDV…RIMSIHKSKG (300 aa).

The protein belongs to the helicase family. AddA subfamily. In terms of assembly, heterodimer of AddA and AddB/RexB. Requires Mg(2+) as cofactor.

The enzyme catalyses Couples ATP hydrolysis with the unwinding of duplex DNA by translocating in the 3'-5' direction.. The catalysed reaction is ATP + H2O = ADP + phosphate + H(+). The heterodimer acts as both an ATP-dependent DNA helicase and an ATP-dependent, dual-direction single-stranded exonuclease. Recognizes the chi site generating a DNA molecule suitable for the initiation of homologous recombination. The AddA nuclease domain is required for chi fragment generation; this subunit has the helicase and 3' -&gt; 5' nuclease activities. This chain is ATP-dependent helicase/nuclease subunit A, found in Clostridium kluyveri (strain NBRC 12016).